A 157-amino-acid chain; its full sequence is SsrA-binding protein (157 aa).

Positions 133–157 are disordered; that stretch reads LHDKRETEKKRDWSREKGRLLRARG. Residues 135-151 show a composition bias toward basic and acidic residues; that stretch reads DKRETEKKRDWSREKGR.

This sequence belongs to the SmpB family.

Its subcellular location is the cytoplasm. Required for rescue of stalled ribosomes mediated by trans-translation. Binds to transfer-messenger RNA (tmRNA), required for stable association of tmRNA with ribosomes. tmRNA and SmpB together mimic tRNA shape, replacing the anticodon stem-loop with SmpB. tmRNA is encoded by the ssrA gene; the 2 termini fold to resemble tRNA(Ala) and it encodes a 'tag peptide', a short internal open reading frame. During trans-translation Ala-aminoacylated tmRNA acts like a tRNA, entering the A-site of stalled ribosomes, displacing the stalled mRNA. The ribosome then switches to translate the ORF on the tmRNA; the nascent peptide is terminated with the 'tag peptide' encoded by the tmRNA and targeted for degradation. The ribosome is freed to recommence translation, which seems to be the essential function of trans-translation. The polypeptide is SsrA-binding protein (Bradyrhizobium diazoefficiens (strain JCM 10833 / BCRC 13528 / IAM 13628 / NBRC 14792 / USDA 110)).